Consider the following 482-residue polypeptide: MFS-type transporter traF (482 aa).

The segment covering 1–14 has biased composition (polar residues); it reads MTSGTEQATLNTEE. Residues 1 to 22 are disordered; that stretch reads MTSGTEQATLNTEENGSDSDHL. N-linked (GlcNAc...) asparagine glycosylation is found at Asn15 and Asn45. Transmembrane regions (helical) follow at residues 52 to 72, 89 to 109, 125 to 145, 149 to 169, 176 to 196, 209 to 229, 275 to 295, 312 to 332, and 354 to 374; these read VFITACLASLVCISTFGSSVM, LSILATALYVLGFAVGPLLFG, VFLFAIFSIPIAVAKNVATIF, FLCGTFAAAPLAIAGGGLADL, GIAVAGFASATFLGPVLGPLV, WTQWLSIIFSLVFLAIYFVFC, PILALLTLYMGFIYGFLYLCF, IGSLPFLSITVGVLIGVVIII, and LVPMMIGSILMPAGIFWFAWT. An N-linked (GlcNAc...) asparagine glycan is attached at Asn376. 3 consecutive transmembrane segments (helical) span residues 379-399, 427-447, and 448-468; these read LPWAPQVVSGVFIGCGILLIF, LLGAGFPLFASYMFDNLGVPW, and AMSLLGFLCVALVPVPFLFFI.

The protein belongs to the major facilitator superfamily. CAR1 family.

It is found in the membrane. In terms of biological role, MFS-type transporter; part of the tra gene cluster that produces terrestric acid. The clavatol biosynthesis cluster cla and the terrestric acid cluster tra are both involved in the production of peniphenones and penilactones. The chain is MFS-type transporter traF from Penicillium crustosum (Blue mold fungus).